Here is a 550-residue protein sequence, read N- to C-terminus: Dr1-associated corepressor homolog (550 aa).

In terms of domain architecture, Histone-fold spans threonine 7–isoleucine 71. Basic and acidic residues predominate over residues aspartate 89 to glycine 103. Disordered regions lie at residues aspartate 89–phenylalanine 355, serine 378–asparagine 444, and phenylalanine 461–phenylalanine 512. Residues glutamate 104–glutamate 140 show a composition bias toward acidic residues. A compositionally biased stretch (gly residues) spans glycine 148 to glycine 164. Over residues threonine 182–proline 193 the composition is skewed to low complexity. Residues asparagine 200–threonine 224 are compositionally biased toward polar residues. 3 stretches are compositionally biased toward low complexity: residues serine 225–serine 238, asparagine 245–asparagine 350, and leucine 382–asparagine 422.

It belongs to the NC2 alpha/DRAP1 family.

The protein resides in the nucleus. In terms of biological role, involved in transcriptional regulation. Component of the NC2 complex which represses RNA polymerase II transcription through binding to tbp and thereby inhibiting the assembly of the preinitiation complex. This is Dr1-associated corepressor homolog (drap1) from Dictyostelium discoideum (Social amoeba).